The following is a 231-amino-acid chain: Large ribosomal subunit protein uL1 (231 aa).

It belongs to the universal ribosomal protein uL1 family. As to quaternary structure, part of the 50S ribosomal subunit.

Its function is as follows. Binds directly to 23S rRNA. The L1 stalk is quite mobile in the ribosome, and is involved in E site tRNA release. Protein L1 is also a translational repressor protein, it controls the translation of the L11 operon by binding to its mRNA. This is Large ribosomal subunit protein uL1 from Stutzerimonas stutzeri (strain A1501) (Pseudomonas stutzeri).